The primary structure comprises 532 residues: T-complex protein 1 subunit epsilon (532 aa).

The protein belongs to the TCP-1 chaperonin family. As to quaternary structure, component of the T-complex protein 1 (TCP1) complex.

The protein resides in the cytoplasm. Functionally, molecular chaperone; assists the folding of proteins upon ATP hydrolysis. This Encephalitozoon cuniculi (strain GB-M1) (Microsporidian parasite) protein is T-complex protein 1 subunit epsilon (CCT5).